A 213-amino-acid chain; its full sequence is Adenylate kinase (213 aa).

Residue 10-15 (GSGKGT) participates in ATP binding. An NMP region spans residues 30 to 59 (STGDMLRTTVNKESVLGKNIQAIIKLGNLV). Residues Thr31, Arg36, 57–59 (NLV), 85–88 (GFPR), and Gln92 contribute to the AMP site. The segment at 122–159 (GRMVHEPSGRIYHVTFNPPKQKGKDDITGENLIIRQDD) is LID. Residues Arg123 and 132–133 (IY) contribute to the ATP site. AMP contacts are provided by Arg156 and Arg167. Cys199 serves as a coordination point for ATP.

It belongs to the adenylate kinase family. In terms of assembly, monomer.

Its subcellular location is the cytoplasm. The catalysed reaction is AMP + ATP = 2 ADP. The protein operates within purine metabolism; AMP biosynthesis via salvage pathway; AMP from ADP: step 1/1. In terms of biological role, catalyzes the reversible transfer of the terminal phosphate group between ATP and AMP. Plays an important role in cellular energy homeostasis and in adenine nucleotide metabolism. This is Adenylate kinase from Baumannia cicadellinicola subsp. Homalodisca coagulata.